A 992-amino-acid chain; its full sequence is Aminopeptidase Q (992 aa).

Topologically, residues 2–13 (GPPSSSGFYVSR) are cytoplasmic. A helical; Signal-anchor for type II membrane protein transmembrane segment spans residues 14–34 (AVALLLAALAAALLLALAVLA). Over 35-992 (ALYGRCARVQ…RMTAWLRKNT (958 aa)) the chain is Extracellular. A disordered region spans residues 47-92 (DLHHSGVPDAASSPRGTQEEPLPTWPPRPTREPAGTATPGHWRPPG). N-linked (GlcNAc...) asparagine glycosylation occurs at N133. A substrate-binding site is contributed by E241. N-linked (GlcNAc...) asparagine glycans are attached at residues N262, N289, N347, and N361. 380–384 (SAMEN) contacts substrate. A Zn(2+)-binding site is contributed by H416. The Proton acceptor role is filled by E417. Zn(2+) is bound by residues H420 and E439. Catalysis depends on Y505, which acts as the Proton donor. 8 N-linked (GlcNAc...) asparagine glycosylation sites follow: N555, N584, N602, N609, N655, N811, N850, and N889.

This sequence belongs to the peptidase M1 family. Requires Zn(2+) as cofactor. As to expression, expressed in skin. Expression levels do not differ between dark and light skin areas.

The protein localises to the membrane. Its function is as follows. Metalloprotease which may be important for placentation by regulating biological activity of key peptides at the embryo-maternal interface. Involved in coat pigmentation patterns. During skin development, may be required to establish the periodicity of tabby markings, initiating a pre-pattern at or before hair follicle development. This is Aminopeptidase Q (LVRN) from Felis catus (Cat).